The following is a 234-amino-acid chain: UPF0502 protein BTH_II0990 (234 aa).

The protein belongs to the UPF0502 family.

The protein is UPF0502 protein BTH_II0990 of Burkholderia thailandensis (strain ATCC 700388 / DSM 13276 / CCUG 48851 / CIP 106301 / E264).